We begin with the raw amino-acid sequence, 397 residues long: 3-ketoacyl-CoA thiolase, mitochondrial (397 aa).

Residues 1–16 (MALLRGVFIVAAKRTP) constitute a mitochondrion; not cleaved transit peptide. Lysine 25 is modified (N6-acetyllysine; alternate). Lysine 25 bears the N6-succinyllysine; alternate mark. The active-site Acyl-thioester intermediate is the cysteine 92. Phosphothreonine is present on threonine 119. Phosphoserine is present on serine 121. Tyrosine 127 is modified (phosphotyrosine). Threonine 136 is modified (phosphothreonine). N6-acetyllysine; alternate is present on lysine 137. Lysine 137 carries the post-translational modification N6-succinyllysine; alternate. The residue at position 140 (serine 140) is a Phosphoserine. Lysine 143, lysine 171, lysine 191, and lysine 209 each carry N6-acetyllysine; alternate. An N6-succinyllysine; alternate mark is found at lysine 143, lysine 171, lysine 191, and lysine 209. An N6-succinyllysine mark is found at lysine 212 and lysine 214. 2 residues coordinate CoA: arginine 224 and threonine 227. Lysine 234 bears the N6-acetyllysine; alternate mark. Lysine 234 is subject to N6-succinyllysine; alternate. Lysine 240 carries the N6-succinyllysine modification. Lysine 241 carries the post-translational modification N6-acetyllysine. Serine 251 contributes to the CoA binding site. Residues lysine 269 and lysine 270 each carry the N6-acetyllysine modification. Lysine 305 carries the N6-acetyllysine; alternate modification. Lysine 305 carries the N6-succinyllysine; alternate modification. Serine 310 is modified (phosphoserine). Position 312 is an N6-acetyllysine; alternate (lysine 312). Lysine 312 carries the post-translational modification N6-succinyllysine; alternate. Residue serine 333 is modified to Phosphoserine. 2 positions are modified to N6-acetyllysine: lysine 340 and lysine 375. The Proton donor/acceptor role is filled by cysteine 382.

It belongs to the thiolase-like superfamily. Thiolase family. In terms of assembly, homotetramer. Interacts with BNIP3.

Its subcellular location is the mitochondrion. It catalyses the reaction an acyl-CoA + acetyl-CoA = a 3-oxoacyl-CoA + CoA. The enzyme catalyses 2 acetyl-CoA = acetoacetyl-CoA + CoA. It carries out the reaction acetyl-CoA + H2O = acetate + CoA + H(+). The catalysed reaction is propanoyl-CoA + H2O = propanoate + CoA + H(+). It catalyses the reaction butanoyl-CoA + H2O = butanoate + CoA + H(+). The enzyme catalyses hexanoyl-CoA + H2O = hexanoate + CoA + H(+). It carries out the reaction octanoyl-CoA + H2O = octanoate + CoA + H(+). The catalysed reaction is decanoyl-CoA + H2O = decanoate + CoA + H(+). It catalyses the reaction dodecanoyl-CoA + H2O = dodecanoate + CoA + H(+). The enzyme catalyses tetradecanoyl-CoA + H2O = tetradecanoate + CoA + H(+). It carries out the reaction hexadecanoyl-CoA + H2O = hexadecanoate + CoA + H(+). It participates in lipid metabolism; fatty acid beta-oxidation. Its function is as follows. In the production of energy from fats, this is one of the enzymes that catalyzes the last step of the mitochondrial beta-oxidation pathway, an aerobic process breaking down fatty acids into acetyl-CoA. Using free coenzyme A/CoA, catalyzes the thiolytic cleavage of medium- to long-chain unbranched 3-oxoacyl-CoAs into acetyl-CoA and a fatty acyl-CoA shortened by two carbon atoms. Also catalyzes the condensation of two acetyl-CoA molecules into acetoacetyl-CoA and could be involved in the production of ketone bodies. Also displays hydrolase activity on various fatty acyl-CoAs. Thereby, could be responsible for the production of acetate in a side reaction to beta-oxidation. Abolishes BNIP3-mediated apoptosis and mitochondrial damage. This Bos taurus (Bovine) protein is 3-ketoacyl-CoA thiolase, mitochondrial (ACAA2).